Consider the following 155-residue polypeptide: Transcriptional repressor NrdR (155 aa).

A zinc finger lies at C3–C34. Residues P49–E139 enclose the ATP-cone domain.

Belongs to the NrdR family. It depends on Zn(2+) as a cofactor.

In terms of biological role, negatively regulates transcription of bacterial ribonucleotide reductase nrd genes and operons by binding to NrdR-boxes. This chain is Transcriptional repressor NrdR, found in Ectopseudomonas mendocina (strain ymp) (Pseudomonas mendocina).